The primary structure comprises 103 residues: N(4)-acetylcytidine amidohydrolase (103 aa).

Positions 6–101 (ITFSQRFQDD…QTQFYVIEFK (96 aa)) constitute an ASCH domain. Residue Lys-21 is the Proton acceptor of the active site. Thr-24 serves as the catalytic Nucleophile. Glu-74 acts as the Proton donor in catalysis.

This sequence belongs to the N(4)-acetylcytidine amidohydrolase family.

It catalyses the reaction N(4)-acetylcytidine + H2O = cytidine + acetate + H(+). The catalysed reaction is N(4)-acetyl-2'-deoxycytidine + H2O = 2'-deoxycytidine + acetate + H(+). It carries out the reaction N(4)-acetylcytosine + H2O = cytosine + acetate + H(+). Catalyzes the hydrolysis of N(4)-acetylcytidine (ac4C). The sequence is that of N(4)-acetylcytidine amidohydrolase (yqfB) from Shigella boydii serotype 4 (strain Sb227).